Consider the following 217-residue polypeptide: Somatotropin (217 aa).

Residues 1–27 (MMAAGPRTSLLLAFALLCLPWTQMVGA) form the signal peptide. A Zn(2+)-binding site is contributed by histidine 46. Residues cysteine 79 and cysteine 190 are joined by a disulfide bond. Serine 132 bears the Phosphoserine mark. Glutamate 199 is a Zn(2+) binding site. Cysteine 207 and cysteine 215 are joined by a disulfide.

It belongs to the somatotropin/prolactin family.

Its subcellular location is the secreted. In terms of biological role, plays an important role in growth control. Its major role in stimulating body growth is to stimulate the liver and other tissues to secrete IGF1. It stimulates both the differentiation and proliferation of myoblasts. It also stimulates amino acid uptake and protein synthesis in muscle and other tissues. This chain is Somatotropin (GH1), found in Giraffa camelopardalis (Giraffe).